A 352-amino-acid polypeptide reads, in one-letter code: N-acetyl-gamma-glutamyl-phosphate reductase (352 aa).

Cys-156 is a catalytic residue.

It belongs to the NAGSA dehydrogenase family. Type 1 subfamily.

The protein localises to the cytoplasm. The enzyme catalyses N-acetyl-L-glutamate 5-semialdehyde + phosphate + NADP(+) = N-acetyl-L-glutamyl 5-phosphate + NADPH + H(+). Its pathway is amino-acid biosynthesis; L-arginine biosynthesis; N(2)-acetyl-L-ornithine from L-glutamate: step 3/4. In terms of biological role, catalyzes the NADPH-dependent reduction of N-acetyl-5-glutamyl phosphate to yield N-acetyl-L-glutamate 5-semialdehyde. This chain is N-acetyl-gamma-glutamyl-phosphate reductase, found in Afipia carboxidovorans (strain ATCC 49405 / DSM 1227 / KCTC 32145 / OM5) (Oligotropha carboxidovorans).